Here is an 829-residue protein sequence, read N- to C-terminus: MNRRDFLKGIASSSFVVLGGSSVLTPLNALAKAGINEDEWLTTGSHFGAFKMKRKNGVIAEVKPFDLDKYPTDMINGIRGMVYNPSRVRYPMVRLDFLLKGHKSNTHQRGDFRFVRVTWDKALTLFKHSLDEVQTQYGPSGLHAGQTGWRATGQLHSSTSHMQRAVGMHGNYVKKIGDYSTGAGQTILPYVLGSTEVYAQGTSWPLILEHSDTIVLWSNDPYKNLQVGWNAETHESFAYLAQLKEKVKQGKIRVISIDPVVTKTQAYLGCEQLYVNPQTDVTLMLAIAHEMISKKLYDDKFIQGYSLGFEEFVPYVMGTKDGVAKTPEWAAPICGVEAHVIRDLAKTLVKGRTQFMMGWCIQRQQHGEQPYWMAAVLATMIGQIGLPGGGISYGHHYSSIGVPSSGAAAPGAFPRNLDENQKPLFDSSDFKGASSTIPVARWIDAILEPGKTIDANGSKVVYPDIKMMIFSGNNPWNHHQDRNRMKQAFHKLECVVTVDVNWTATCRFSDIVLPACTTYERNDIDVYGAYANRGILAMQKMVEPLFDSLSDFEIFTRFAAVLGKEKEYTRNMGEMEWLETLYNECKAANAGKFEMPDFATFWKQGYVHFGDGEVWTRHADFRNDPEINPLGTPSGLIEIFSRKIDQFGYDDCKGHPTWMEKTERSHGGPGSDKHPIWLQSCHPDKRLHSQMCESREYRETYAVNGREPVYISPVDAKARGIKDGDIVRVFNDRGQLLAGAVVSDNFPKGIVRIHEGAWYGPVGKDGSTEGGAEVGALCSYGDPNTLTLDIGTSKLAQACSAYTCLVEFEKYQGKVPKVSSFDGPIEVEI.

A signal peptide (tat-type signal) is located at residues M1 to A31. Residue S180 coordinates Mo-bis(molybdopterin guanine dinucleotide).

It belongs to the prokaryotic molybdopterin-containing oxidoreductase family. Mo-bis(molybdopterin guanine dinucleotide) is required as a cofactor. Predicted to be exported by the Tat system. The position of the signal peptide cleavage has been experimentally proven.

The protein resides in the periplasm. It carries out the reaction trimethylamine + 2 Fe(III)-[cytochrome c] + H2O = trimethylamine N-oxide + 2 Fe(II)-[cytochrome c] + 3 H(+). Its function is as follows. Reduces trimethylamine-N-oxide (TMAO) into trimethylamine; an anaerobic reaction coupled to energy-yielding reactions. This Shewanella massilia protein is Trimethylamine-N-oxide reductase (torA).